We begin with the raw amino-acid sequence, 212 residues long: Uracil phosphoribosyltransferase (212 aa).

Residues arginine 78, arginine 103, and 130-138 contribute to the 5-phospho-alpha-D-ribose 1-diphosphate site; that span reads DPMLATGSS. Uracil-binding positions include isoleucine 193 and 198–200; that span reads GDA. Aspartate 199 lines the 5-phospho-alpha-D-ribose 1-diphosphate pocket.

The protein belongs to the UPRTase family. Requires Mg(2+) as cofactor.

The enzyme catalyses UMP + diphosphate = 5-phospho-alpha-D-ribose 1-diphosphate + uracil. The protein operates within pyrimidine metabolism; UMP biosynthesis via salvage pathway; UMP from uracil: step 1/1. Its activity is regulated as follows. Allosterically activated by GTP. Its function is as follows. Catalyzes the conversion of uracil and 5-phospho-alpha-D-ribose 1-diphosphate (PRPP) to UMP and diphosphate. The sequence is that of Uracil phosphoribosyltransferase from Pseudomonas fluorescens (strain ATCC BAA-477 / NRRL B-23932 / Pf-5).